The sequence spans 195 residues: Matrix protein (195 aa).

Belongs to the novirhabdovirus matrix protein family. As to quaternary structure, homomultimer.

It localises to the virion. The protein localises to the host cytoplasm. Its function is as follows. The M protein has a crucial role in virus assembly and interacts with the RNP complex as well as with the viral membrane. In Salmo (IHNV), this protein is Matrix protein (M).